The following is a 352-amino-acid chain: Uroporphyrinogen decarboxylase (352 aa).

Substrate contacts are provided by residues 26-30 (RQAGR), Phe45, Asp76, Tyr153, Ser208, and His323.

This sequence belongs to the uroporphyrinogen decarboxylase family. In terms of assembly, homodimer.

Its subcellular location is the cytoplasm. The enzyme catalyses uroporphyrinogen III + 4 H(+) = coproporphyrinogen III + 4 CO2. It participates in porphyrin-containing compound metabolism; protoporphyrin-IX biosynthesis; coproporphyrinogen-III from 5-aminolevulinate: step 4/4. Functionally, catalyzes the decarboxylation of four acetate groups of uroporphyrinogen-III to yield coproporphyrinogen-III. The polypeptide is Uroporphyrinogen decarboxylase (Parasynechococcus marenigrum (strain WH8102)).